The primary structure comprises 126 residues: Integrin alpha-M (126 aa).

Residues Asn25, Asn78, and Asn106 are each glycosylated (N-linked (GlcNAc...) asparagine).

This sequence belongs to the integrin alpha chain family. Heterodimer of an alpha and a beta chain. ITGAM associates with ITGB2. Found in a complex with CD177 and ITGB2/CD18. Interacts with JAM3. Interacts with THBD. Interacts with TMEM268; this interaction inhibits ITGAM degradation via the endosome-lysosome pathway.

The protein resides in the cell membrane. Its subcellular location is the membrane raft. In terms of biological role, integrin ITGAM/ITGB2 is implicated in various adhesive interactions of monocytes, macrophages and granulocytes as well as in mediating the uptake of complement-coated particles. It is identical with CR-3, the receptor for the iC3b fragment of the third complement component. It probably recognizes the R-G-D peptide in C3b. Integrin ITGAM/ITGB2 is also a receptor for fibrinogen, factor X and ICAM1. It recognizes P1 and P2 peptides of fibrinogen gamma chain. Regulates neutrophil migration. In association with beta subunit ITGB2/CD18, required for CD177-PRTN3-mediated activation of TNF primed neutrophils. May regulate phagocytosis-induced apoptosis in extravasated neutrophils. May play a role in mast cell development. Required with TYROBP/DAP12 in microglia to control production of microglial superoxide ions which promote the neuronal apoptosis that occurs during brain development. This is Integrin alpha-M (ITGAM) from Cavia porcellus (Guinea pig).